The following is a 104-amino-acid chain: Protein S100-A14 (104 aa).

The EF-hand domain maps to 27 to 61; sequence KNFHQYSVEGGKETLTPSELRDLVTQQLPHLMPSN.

Belongs to the S-100 family. As to quaternary structure, homodimer. Interacts with AGER. As to expression, expressed at highest levels in colon and at moderate levels in thymus, kidney, liver, small intestine, and lung. Low expression in heart and no expression is seen in brain, skeletal muscle, spleen, placenta and peripheral blood leukocytes.

The protein localises to the cytoplasm. In terms of biological role, modulates P53/TP53 protein levels, and thereby plays a role in the regulation of cell survival and apoptosis. Depending on the context, it can promote cell proliferation or apoptosis. Plays a role in the regulation of cell migration by modulating the levels of MMP2, a matrix protease that is under transcriptional control of P53/TP53. Does not bind calcium. The chain is Protein S100-A14 (S100A14) from Homo sapiens (Human).